Consider the following 104-residue polypeptide: Large ribosomal subunit protein uL24 (104 aa).

The protein belongs to the universal ribosomal protein uL24 family. In terms of assembly, part of the 50S ribosomal subunit.

In terms of biological role, one of two assembly initiator proteins, it binds directly to the 5'-end of the 23S rRNA, where it nucleates assembly of the 50S subunit. One of the proteins that surrounds the polypeptide exit tunnel on the outside of the subunit. This chain is Large ribosomal subunit protein uL24, found in Mesorhizobium japonicum (strain LMG 29417 / CECT 9101 / MAFF 303099) (Mesorhizobium loti (strain MAFF 303099)).